The primary structure comprises 883 residues: MSKELSPKYNPAEVEEGRYQTWLDQDVFKPSGDTEAKPYSIVIPPPNVTGKLHLGHAWDTTLQDIIIRQKRMQGFDTLWLPGMDHAGIATQAKVEERLREQGISRYDLGREKFLDKVWEWKDEYAATIKSQWGKMGLSVDYSRERFTLDEGLSKAVRKVFVDLYNKGWIYRGEFIINWDPAARTALSDIEVIHKDVEGAFYHMNYMLEDGSRALEVATTRPETMFGDVAVAVNPEDARYKDLIGQNVILPIINKPIPIVADEHADPEFGTGVVKITPAHDPNDFAVGQRHNLPQVNVMNDDGTMNELADEFNGMDRFEARKAVVAKLESLGNLVKIKKTTHSVGHSERTGVVVEPRLSTQWFVKMDQLAKNAIANQDTEDKVEFYPPRFNDTFMSWMENVHDWVISRQLWWGHQIPAWYNVNGEMYVGEDAPEGDGWTQDEDVLDTWFSSALWPFSTMGWPDTEAADFKRYFPTSTLVTGYDIIFFWVSRMIFQSLEFTGRQPFSNVLIHGLIRDEEGRKMSKSLGNGIDPMDVIEKYGADALRWFLSNGSAPGQDVRFSYEKMDASWNFINKIWNISRYILMNNEGLTLDQARENVEKVVNSQVGNVTDRWILHNLNETVGKVTENFDKFEFGVAGHILYNFIWEEFANWYVELTKEVLYSDNEDEKVITRSVLLYTLDQILRLLHPIMPFVTEEIFGQYAEGSIVLASYPQVNATFENQTAHKGVESLKDLIRSVRNSRAEVNVAPSKPITILVKTSDSELESFFKDNSNYIKRFTNPETLEISSAIATPELAMSSVITGAEIFLPLADLLNVEEELARLEKELAKWQKELDMVGKKLSNERFVANAKPEVVQKEKDKQTDYQTKYDATIARIEEMKKLVR.

Residues 46-56 (PNVTGKLHLGH) carry the 'HIGH' region motif. Positions 520-524 (KMSKS) match the 'KMSKS' region motif. K523 lines the ATP pocket. A coiled-coil region spans residues 809–844 (LADLLNVEEELARLEKELAKWQKELDMVGKKLSNER).

Belongs to the class-I aminoacyl-tRNA synthetase family. ValS type 1 subfamily. As to quaternary structure, monomer.

The protein resides in the cytoplasm. The catalysed reaction is tRNA(Val) + L-valine + ATP = L-valyl-tRNA(Val) + AMP + diphosphate. Catalyzes the attachment of valine to tRNA(Val). As ValRS can inadvertently accommodate and process structurally similar amino acids such as threonine, to avoid such errors, it has a 'posttransfer' editing activity that hydrolyzes mischarged Thr-tRNA(Val) in a tRNA-dependent manner. The protein is Valine--tRNA ligase of Streptococcus agalactiae serotype V (strain ATCC BAA-611 / 2603 V/R).